Consider the following 334-residue polypeptide: Thioredoxin reductase (334 aa).

FAD is bound by residues serine 10 to alanine 13, isoleucine 39 to alanine 40, glutamine 44, asparagine 53, valine 86, cysteine 143, aspartate 287, and arginine 294 to alanine 296. The cysteines at positions 140 and 143 are disulfide-linked.

This sequence belongs to the class-II pyridine nucleotide-disulfide oxidoreductase family. Homodimer. It depends on FAD as a cofactor.

It is found in the cytoplasm. It carries out the reaction [thioredoxin]-dithiol + NADP(+) = [thioredoxin]-disulfide + NADPH + H(+). The sequence is that of Thioredoxin reductase (cys-9) from Neurospora crassa (strain ATCC 24698 / 74-OR23-1A / CBS 708.71 / DSM 1257 / FGSC 987).